A 66-amino-acid chain; its full sequence is Large ribosomal subunit protein bL35 (66 aa).

2 stretches are compositionally biased toward basic residues: residues 1–15 (MPKL…KRFK) and 28–45 (TKRH…RTRR). The tract at residues 1–49 (MPKLKTKSSAKKRFKVTASGRVMSAQSTKRHGMTKRSKRSLRTRRGIAQ) is disordered.

The protein belongs to the bacterial ribosomal protein bL35 family.

The sequence is that of Large ribosomal subunit protein bL35 from Anaplasma marginale (strain Florida).